We begin with the raw amino-acid sequence, 420 residues long: Transcription factor dbaG (420 aa).

It localises to the nucleus. Its function is as follows. Transcription factor that coregulates the expression of the gene cluster that mediates the biosynthesis of the antibiotic 2,4- dihydroxy-3-methyl-6-(2-oxopropyl)benzaldehyde (DHMBA) and its derivatives. Specifically positively regulates the expression of the FAD-dependent oxidoreductase dbaF. The chain is Transcription factor dbaG from Emericella nidulans (strain FGSC A4 / ATCC 38163 / CBS 112.46 / NRRL 194 / M139) (Aspergillus nidulans).